The sequence spans 106 residues: uncharacterized protein (106 aa).

A helical membrane pass occupies residues 78 to 98; sequence LAITGYVVSIPIVLPILIIFI.

The protein resides in the membrane. This is an uncharacterized protein from Haemophilus influenzae (strain ATCC 51907 / DSM 11121 / KW20 / Rd).